A 201-amino-acid polypeptide reads, in one-letter code: Small ribosomal subunit protein uS4c (201 aa).

Residues 17–44 form a disordered region; it reads ALPGLTNKKPRTGSDLRNQSRSGKKSQY. Residues 89-149 form the S4 RNA-binding domain; the sequence is MRLDNILFRL…DEQKSRALIQ (61 aa).

The protein belongs to the universal ribosomal protein uS4 family. In terms of assembly, part of the 30S ribosomal subunit. Contacts protein S5. The interaction surface between S4 and S5 is involved in control of translational fidelity.

The protein localises to the plastid. It localises to the chloroplast. Functionally, one of the primary rRNA binding proteins, it binds directly to 16S rRNA where it nucleates assembly of the body of the 30S subunit. In terms of biological role, with S5 and S12 plays an important role in translational accuracy. The sequence is that of Small ribosomal subunit protein uS4c (rps4) from Solanum bulbocastanum (Wild potato).